We begin with the raw amino-acid sequence, 449 residues long: mRNA-capping enzyme subunit alpha (449 aa).

The N6-GMP-lysine intermediate role is filled by Lys-66. Residues 405 to 449 (DERKNGAYQHHSSSFSESRQQPKAEPVAEKKQTEPKYVDDDDWSD) are disordered. Over residues 414 to 423 (HHSSSFSESR) the composition is skewed to polar residues. The segment covering 424–442 (QQPKAEPVAEKKQTEPKYV) has biased composition (basic and acidic residues).

It belongs to the eukaryotic GTase family. In terms of assembly, heterodimer. The mRNA-capping enzyme is composed of two separate chains alpha and beta, respectively a mRNA guanylyltransferase and an mRNA 5'-triphosphate monophosphatase.

Its subcellular location is the nucleus. It catalyses the reaction a 5'-end diphospho-ribonucleoside in mRNA + GTP + H(+) = a 5'-end (5'-triphosphoguanosine)-ribonucleoside in mRNA + diphosphate. Functionally, second step of mRNA capping. Transfer of the GMP moiety of GTP to the 5'-end of RNA via an enzyme-GMP covalent reaction intermediate. This Candida glabrata (strain ATCC 2001 / BCRC 20586 / JCM 3761 / NBRC 0622 / NRRL Y-65 / CBS 138) (Yeast) protein is mRNA-capping enzyme subunit alpha (CEG1).